A 667-amino-acid polypeptide reads, in one-letter code: Protein-glutamine gamma-glutamyltransferase 4 (667 aa).

Asn-151, Asn-220, and Asn-227 each carry an N-linked (GlcNAc...) asparagine glycan. Catalysis depends on residues Cys-256, His-315, and Asp-338. Ca(2+)-binding residues include Asn-378 and Asp-380. Residue Asn-408 is glycosylated (N-linked (GlcNAc...) asparagine). The Ca(2+) site is built by Glu-430 and Glu-435. The segment at 430 to 449 (EGSPEERKAMEKASGKRPDD) is disordered. N-linked (GlcNAc...) asparagine glycosylation is found at Asn-472 and Asn-488.

The protein belongs to the transglutaminase superfamily. Transglutaminase family. As to quaternary structure, homodimer. It depends on Ca(2+) as a cofactor. Post-translationally, the N-terminus is blocked. Probably linked to the cell membrane via a lipid-anchor, possibly a GPI-anchor. In terms of processing, N-glycosylated on 2 Asn residues by a high mannose oligosaccharide consisting of five mannose residues and a fucosylated biantennary complex glycan. Expressed in the coagulating gland, the dorsal part of the prostate and in semen (at protein level). Expressed at low levels in the lateral prostate and seminal vesicle. Not expressed in the epididymis, kidney, liver, serum, sperm plug, testes and ventral prostate.

The protein resides in the secreted. Its subcellular location is the cell membrane. It carries out the reaction L-glutaminyl-[protein] + L-lysyl-[protein] = [protein]-L-lysyl-N(6)-5-L-glutamyl-[protein] + NH4(+). Its function is as follows. Associated with the mammalian reproductive process. Plays an important role in the formation of the seminal coagulum through the cross-linking of specific proteins present in the seminal plasma. Transglutaminase is also required to stabilize the copulatory plug. The protein is Protein-glutamine gamma-glutamyltransferase 4 (Tgm4) of Rattus norvegicus (Rat).